Here is a 102-residue protein sequence, read N- to C-terminus: Small ribosomal subunit protein uS10 (102 aa).

It belongs to the universal ribosomal protein uS10 family. As to quaternary structure, part of the 30S ribosomal subunit.

In terms of biological role, involved in the binding of tRNA to the ribosomes. This Methanospirillum hungatei JF-1 (strain ATCC 27890 / DSM 864 / NBRC 100397 / JF-1) protein is Small ribosomal subunit protein uS10.